Reading from the N-terminus, the 130-residue chain is Small ribosomal subunit protein uS9 (130 aa).

Belongs to the universal ribosomal protein uS9 family.

This is Small ribosomal subunit protein uS9 from Streptococcus equi subsp. equi (strain 4047).